Reading from the N-terminus, the 383-residue chain is uncharacterized protein (383 aa).

It belongs to the peptidase M20 family.

This is an uncharacterized protein from Staphylococcus epidermidis (strain ATCC 12228 / FDA PCI 1200).